The sequence spans 78 residues: Exodeoxyribonuclease 7 small subunit (78 aa).

The protein belongs to the XseB family. In terms of assembly, heterooligomer composed of large and small subunits.

Its subcellular location is the cytoplasm. The catalysed reaction is Exonucleolytic cleavage in either 5'- to 3'- or 3'- to 5'-direction to yield nucleoside 5'-phosphates.. Functionally, bidirectionally degrades single-stranded DNA into large acid-insoluble oligonucleotides, which are then degraded further into small acid-soluble oligonucleotides. The sequence is that of Exodeoxyribonuclease 7 small subunit from Paracoccus zeaxanthinifaciens.